The following is a 385-amino-acid chain: Transcription factor-like protein DPB (385 aa).

2 disordered regions span residues 1–53 (MTTT…EQTI) and 71–102 (DIQG…KTGR). Positions 22–31 (PSTRSWGTAV) are enriched in polar residues. The segment covering 32–53 (SGQSVSTSGSMGSPSSRSEQTI) has biased composition (low complexity). A DNA-binding region spans residues 101-184 (GRGLRQFSMK…KKEIQWRGLP (84 aa)). Positions 150–184 (DEKNIRRRVYDALNVLMAMDIISKDKKEIQWRGLP) match the DEF box motif. A coiled-coil region spans residues 185–234 (RTSLSDIEELKNERLSLRNRIEKKTAYSQELEEQYVGLQNLIQRNEHLYS). The segment at 296 to 385 (PPQQPNGRNN…IMNSSMKPEN (90 aa)) is disordered. Positions 300–327 (PNGRNNSQLVCHNFTPENPNKGPSTGPT) are enriched in polar residues. Low complexity predominate over residues 336-349 (HLQSQQHQQHSQLQ). Over residues 355–364 (ETNNVTSSAD) the composition is skewed to polar residues.

It belongs to the E2F/DP family. In terms of assembly, heterodimer with non-phosphorylated E2FC. No interaction with phosphorylated E2FC. Interacts preferentially with E2FC, but also with E2FA and E2FB. Interacts with SKP2A. Targeted for proteasomal degradation by the SCF(SKP2A) E3 ubiquitin ligase complex. In terms of processing, phosphorylated. As to expression, ubiquitous.

It localises to the nucleus. Its subcellular location is the cytoplasm. Its function is as follows. Involved in the regulation of the G1/S transition. Increases the DNA binding activity of E2F proteins after heterodimerization. The complex DPB/E2FC restricts cell division and lateral root initiation and may function as a negative regulator of E2F-regulated genes. The interaction with SKP2A is controlled by auxin. The sequence is that of Transcription factor-like protein DPB (DPB) from Arabidopsis thaliana (Mouse-ear cress).